Reading from the N-terminus, the 187-residue chain is Transmembrane protein 212 (187 aa).

5 helical membrane-spanning segments follow: residues 11 to 31 (TLVT…FPVF), 42 to 62 (VWIA…SLVL), 76 to 96 (AVFT…TVAL), 106 to 126 (FYSF…TFPF), and 148 to 168 (LQVL…AVFI).

The protein localises to the membrane. The chain is Transmembrane protein 212 (Tmem212) from Mus musculus (Mouse).